A 178-amino-acid chain; its full sequence is Large ribosomal subunit protein uL6 (178 aa).

Belongs to the universal ribosomal protein uL6 family. As to quaternary structure, part of the 50S ribosomal subunit.

Its function is as follows. This protein binds to the 23S rRNA, and is important in its secondary structure. It is located near the subunit interface in the base of the L7/L12 stalk, and near the tRNA binding site of the peptidyltransferase center. This Thermobifida fusca (strain YX) protein is Large ribosomal subunit protein uL6.